Here is a 472-residue protein sequence, read N- to C-terminus: Argininosuccinate lyase (472 aa).

It belongs to the lyase 1 family. Argininosuccinate lyase subfamily.

It is found in the cytoplasm. It catalyses the reaction 2-(N(omega)-L-arginino)succinate = fumarate + L-arginine. The protein operates within amino-acid biosynthesis; L-arginine biosynthesis; L-arginine from L-ornithine and carbamoyl phosphate: step 3/3. The protein is Argininosuccinate lyase of Maricaulis maris (strain MCS10) (Caulobacter maris).